We begin with the raw amino-acid sequence, 419 residues long: Probable pectate lyase C (419 aa).

Residues Met1 to Ala19 form the signal peptide. N-linked (GlcNAc...) asparagine glycosylation is found at Asn48, Asn164, and Asn201. Residue Arg204 is part of the active site. One can recognise an EF-hand domain in the interval Asn261–Met296. Ca(2+) contacts are provided by Asp274, Asp276, Asp278, Thr280, and Glu285. Residues Glu350–Ser395 form a disordered region. Positions Ser373–Ile386 are enriched in acidic residues.

Belongs to the polysaccharide lyase 1 family. It depends on Ca(2+) as a cofactor.

It localises to the secreted. It catalyses the reaction Eliminative cleavage of (1-&gt;4)-alpha-D-galacturonan to give oligosaccharides with 4-deoxy-alpha-D-galact-4-enuronosyl groups at their non-reducing ends.. Its function is as follows. Pectinolytic enzyme consist of four classes of enzymes: pectin lyase, polygalacturonase, pectin methylesterase and rhamnogalacturonase. Among pectinolytic enzymes, pectin lyase is the most important in depolymerization of pectin, since it cleaves internal glycosidic bonds of highly methylated pectins. Favors pectate, the anion, over pectin, the methyl ester. The chain is Probable pectate lyase C (plyC) from Aspergillus terreus (strain NIH 2624 / FGSC A1156).